Here is a 131-residue protein sequence, read N- to C-terminus: Profilin-6 (131 aa).

The protein belongs to the profilin family. As to quaternary structure, occurs in many kinds of cells as a complex with monomeric actin in a 1:1 ratio.

It localises to the cytoplasm. It is found in the cytoskeleton. Its function is as follows. Binds to actin and affects the structure of the cytoskeleton. At high concentrations, profilin prevents the polymerization of actin, whereas it enhances it at low concentrations. By binding to PIP2, it inhibits the formation of IP3 and DG. The polypeptide is Profilin-6 (Hevea brasiliensis (Para rubber tree)).